A 491-amino-acid chain; its full sequence is Ketol-acid reductoisomerase (NADP(+)) (491 aa).

Residues 15-208 (AQLGKCRFMG…GGHRAGVLES (194 aa)) enclose the KARI N-terminal Rossmann domain. NADP(+) is bound by residues 45-48 (CGAQ), Arg-68, Arg-76, Ser-78, and 108-110 (DKQ). His-132 is a catalytic residue. Gly-158 serves as a coordination point for NADP(+). 2 consecutive KARI C-terminal knotted domains span residues 209 to 344 (SFVA…TAPQ) and 345 to 484 (YEGK…MTDM). Mg(2+) is bound by residues Asp-217, Glu-221, Glu-389, and Glu-393. Residue Ser-414 coordinates substrate.

This sequence belongs to the ketol-acid reductoisomerase family. It depends on Mg(2+) as a cofactor.

The catalysed reaction is (2R)-2,3-dihydroxy-3-methylbutanoate + NADP(+) = (2S)-2-acetolactate + NADPH + H(+). It carries out the reaction (2R,3R)-2,3-dihydroxy-3-methylpentanoate + NADP(+) = (S)-2-ethyl-2-hydroxy-3-oxobutanoate + NADPH + H(+). It participates in amino-acid biosynthesis; L-isoleucine biosynthesis; L-isoleucine from 2-oxobutanoate: step 2/4. It functions in the pathway amino-acid biosynthesis; L-valine biosynthesis; L-valine from pyruvate: step 2/4. Involved in the biosynthesis of branched-chain amino acids (BCAA). Catalyzes an alkyl-migration followed by a ketol-acid reduction of (S)-2-acetolactate (S2AL) to yield (R)-2,3-dihydroxy-isovalerate. In the isomerase reaction, S2AL is rearranged via a Mg-dependent methyl migration to produce 3-hydroxy-3-methyl-2-ketobutyrate (HMKB). In the reductase reaction, this 2-ketoacid undergoes a metal-dependent reduction by NADPH to yield (R)-2,3-dihydroxy-isovalerate. The sequence is that of Ketol-acid reductoisomerase (NADP(+)) from Shigella flexneri.